The sequence spans 365 residues: uncharacterized protein (365 aa).

A run of 3 helical transmembrane segments spans residues 105–125 (TGNWFLVILFLALLWLRQCWL), 151–171 (ILTTLVTVGTTLGTPVFSLTI), and 187–207 (IFLIIFSVFSISLGLVSSLIF).

The protein resides in the cell membrane. This is an uncharacterized protein from Mycoplasma genitalium (strain ATCC 33530 / DSM 19775 / NCTC 10195 / G37) (Mycoplasmoides genitalium).